The primary structure comprises 103 residues: Floral defensin-like protein 1 (103 aa).

Positions 1–25 (MARSICFFAVAILALMLFAAYDAEA) are cleaved as a signal peptide. 5 disulfides stabilise this stretch: Cys-28-Cys-72, Cys-32-Cys-48, Cys-39-Cys-59, Cys-45-Cys-66, and Cys-49-Cys-68. A propeptide spans 73–103 (VFEKTEATQTETFTKDVNTLAEALLEADMMV) (removed in mature form).

The protein belongs to the DEFL family. Post-translationally, when compared to other plant defensins, the petunia defensins have an additional fifth disulfide bond. As to expression, petals.

The protein resides in the secreted. The protein localises to the vacuole. Its function is as follows. Plant defense peptide with antifungal activity against F.oxysporum and B.cinerea. In Petunia hybrida (Petunia), this protein is Floral defensin-like protein 1 (D1).